Reading from the N-terminus, the 203-residue chain is Gramillins biosynthetic cluster protein FGSG_00038 (203 aa).

Its pathway is mycotoxin biosynthesis. In terms of biological role, part of the gene cluster that mediates the biosynthesis of gramillins A and B, bicyclic lipopeptides that induce cell death in maize leaves but not in wheat leaves. The nonribosomal peptide synthetase GRA1 incorporates respectively a glutamic adic (Glu), a leucine (Leu), a serine (Ser), a hydroxyglutamine (HOGln), a 2-amino decanoic acid, and 2 cysteins (CysB and CysA). The biosynthesis of 2-amino decanoic acid incorporated in gramillins could be initiated by a fatty acid synthase composed of the alpha and beta subunits FGSG_00036 and FGSG_11656. The cytochrome P450 monooxygenase FGSG_15680 could hydroxylate the fatty acid chain. Subsequent oxidation to the ketone by the oxidoreductase FGSG_00048 and transamination by aminotransferase FGSG_00049 could form 2-amino-decanoic acid. On the other hand, FGSG_15680 could also be responsible for the HO-modified glutamine at the gamma-position. Whether hydroxylation occurs on the fully assembled product or on the Gln residue prior to assembly into the gramillins requires further proof. The thioredoxin FGSG_00043 could also be required for the disulfide-bond formation between CysA and CysB. The specific involvement of the remaining proteins from the cluster is more difficult to discern, but could have broader regulatory (FGSG_00040 and FGSG_11657) or enzymatic functions (FGSG_00044 and FGSG_00045). The final C-domain of GRA1 does not possess the expected sequence of a termination CT domain, often implicated in macrocyclization and release of a cyclopeptidein fungal NRPs; and the thioesterase FGSG_00047 may act in concert with the terminal C-domain of GRA1 to catalyze the formation of the macrocyclic anhydride and release of the products. The protein is Gramillins biosynthetic cluster protein FGSG_00038 of Gibberella zeae (strain ATCC MYA-4620 / CBS 123657 / FGSC 9075 / NRRL 31084 / PH-1) (Wheat head blight fungus).